We begin with the raw amino-acid sequence, 389 residues long: MRFSNFLTVSALLTGALGAPAVRHKHEKRDVVTATVHAQVTVVVSGNSGETIVPVNENAVVATTSSTAVASQATTSTLEPTTSANVVTSQQQTSTLQSSEAASTVGSSTSSSPSSSSSTSSSASSSASSSISASGAKGITYSPYNDDGSCKSTAQVASDLEQLTGFDNIRLYGVDCSQVENVLQAKTSSQKLFLGIYYVDKIQDAVDTIKSAVESYGSWDDITTVSVGNELVNGGSATTTQVGEYVSTAKSALTSAGYTGSVVSVDTFIAVINNPDLCNYSDYMAVNAHAYFDENTAAQDAGPWVLEQIERVYTACGGKKDVVITETGWPSKGDTYGEAVPSKANQEAAISSIKSSCGSSAYLFTAFNDLWKDDGQYGVEKYWGILSSD.

An N-terminal signal peptide occupies residues 1 to 18 (MRFSNFLTVSALLTGALG). Positions 19–29 (APAVRHKHEKR) are excised as a propeptide. The segment at 70-134 (ASQATTSTLE…SSASSSISAS (65 aa)) is disordered. An N-linked (GlcNAc...) asparagine glycan is attached at N279. E326 (nucleophile) is an active-site residue.

This sequence belongs to the glycosyl hydrolase 17 family. Glycosylated.

The protein localises to the secreted. It is found in the cell wall. In terms of biological role, glucanases possibly play a role in cell expansion during growth, in cell-cell fusion during mating, and in spore release during sporulation. The sequence is that of Probable family 17 glucosidase SCW10 (SCW10) from Saccharomyces cerevisiae (strain ATCC 204508 / S288c) (Baker's yeast).